The primary structure comprises 338 residues: Ferredoxin--NADP reductase (338 aa).

Residues aspartate 36, glutamine 44, tyrosine 49, valine 89, phenylalanine 123, aspartate 290, and threonine 331 each coordinate FAD.

This sequence belongs to the ferredoxin--NADP reductase type 2 family. Homodimer. FAD is required as a cofactor.

The enzyme catalyses 2 reduced [2Fe-2S]-[ferredoxin] + NADP(+) + H(+) = 2 oxidized [2Fe-2S]-[ferredoxin] + NADPH. In Anaplasma phagocytophilum (strain HZ), this protein is Ferredoxin--NADP reductase.